The chain runs to 173 residues: Shikimate kinase (173 aa).

Position 14-19 (14-19) interacts with ATP; it reads GAGKST. Serine 18 contacts Mg(2+). Substrate is bound by residues aspartate 36, arginine 60, and glycine 82. Position 120 (arginine 120) interacts with ATP. Position 140 (arginine 140) interacts with substrate. Residue glutamine 157 participates in ATP binding.

The protein belongs to the shikimate kinase family. Monomer. Mg(2+) serves as cofactor.

Its subcellular location is the cytoplasm. It catalyses the reaction shikimate + ATP = 3-phosphoshikimate + ADP + H(+). It participates in metabolic intermediate biosynthesis; chorismate biosynthesis; chorismate from D-erythrose 4-phosphate and phosphoenolpyruvate: step 5/7. In terms of biological role, catalyzes the specific phosphorylation of the 3-hydroxyl group of shikimic acid using ATP as a cosubstrate. The sequence is that of Shikimate kinase from Baumannia cicadellinicola subsp. Homalodisca coagulata.